The sequence spans 207 residues: MARCKS-related protein 1-B (207 aa).

Composition is skewed to low complexity over residues 1–25 (MGSQ…AAVK) and 63–77 (AGAG…AAEG). Residues 1–207 (MGSQASKGGV…STPAPSEQKE (207 aa)) form a disordered region. Glycine 2 is lipidated: N-myristoyl glycine. The segment covering 78-90 (EAAKPEGEATKET) has biased composition (basic and acidic residues). The segment at 93–116 (KKKKKFSLKNSFKFKGISLKKSKK) is effector domain involved in lipid-binding. Residues 100–109 (LKNSFKFKGI) are compositionally biased toward low complexity. Basic and acidic residues-rich tracts occupy residues 131 to 154 (TEEK…KAEE) and 163 to 182 (PKAE…KEEA). Positions 195-207 (ETNSTPAPSEQKE) are enriched in polar residues.

It belongs to the MARCKS family. As to expression, strongly expressed in brain and eye. Also detected at lower levels in muscle.

Its subcellular location is the cytoplasm. The protein resides in the cytoskeleton. It localises to the cell membrane. Functionally, involved in the control of cell movement by regulating actin cytoskeleton homeostasis and filopodium and lamellipodium formation. The chain is MARCKS-related protein 1-B from Danio rerio (Zebrafish).